A 254-amino-acid polypeptide reads, in one-letter code: Homeobox protein Dlx4b (254 aa).

The homeobox DNA-binding region spans 129–188; sequence IRKPRTIYSSVQLQALHQRFQQTQYLALPERADLAAKLGLTQTQVKIWFQNKRSKYKKIM.

Belongs to the distal-less homeobox family.

The protein resides in the nucleus. Its function is as follows. During larvae development, may be important for neurocranium morphogenesis. The chain is Homeobox protein Dlx4b (dlx4b) from Danio rerio (Zebrafish).